The chain runs to 213 residues: Immunoglobulin lambda-like polypeptide 1 (213 aa).

Residues 1–37 form the signal peptide; that stretch reads MRPGTGQGGLEAPGEPGPNLRQRWPLLLLGLAVVTHG. The interval 97–108 is j region; it reads VFGSGTQLTVLS. Positions 109-213 are c region; sequence QPKATPSVTL…EKTVAPAECS (105 aa). The Ig-like C1-type domain maps to 114–208; it reads PSVTLFPPSS…EGSTVEKTVA (95 aa). An intrachain disulfide couples C135 to C194.

In terms of assembly, associates non-covalently with VPREB1. Interacts with SYNV1/HRD1 (via N-terminus); this interaction leads to increased IGLL1 ubiquitination and degradation in pre-B cells, possibly through a lysosomal, not proteasomal, pathway. In terms of tissue distribution, expressed only in pre-B-cells and a special B-cell line (which is surface Ig negative).

Its subcellular location is the endoplasmic reticulum. The protein localises to the secreted. Critical for B-cell development. The polypeptide is Immunoglobulin lambda-like polypeptide 1 (IGLL1) (Homo sapiens (Human)).